The chain runs to 189 residues: MKKIVLYGGQFNPIHTAHMIVASEVFHELQPDEFYFLPSFMSPLKKHHDFIDVQHRLTMIQMIIDELGFGDICDDEIKRGGQSYTYDTIKAFKEQHKDSELYFVIGTDQYNQLEKWYQIEYLKEMVTFVVVNRDKNSQNVENAMIAIQIPRVDISSTMIRQRVSEGKSIQVLVPKSVENYIKGEGLYEH.

Belongs to the NadD family.

The enzyme catalyses nicotinate beta-D-ribonucleotide + ATP + H(+) = deamido-NAD(+) + diphosphate. It participates in cofactor biosynthesis; NAD(+) biosynthesis; deamido-NAD(+) from nicotinate D-ribonucleotide: step 1/1. Catalyzes the reversible adenylation of nicotinate mononucleotide (NaMN) to nicotinic acid adenine dinucleotide (NaAD). In Staphylococcus aureus (strain USA300 / TCH1516), this protein is Probable nicotinate-nucleotide adenylyltransferase.